A 440-amino-acid polypeptide reads, in one-letter code: Putative F-box/LRR-repeat protein At5g15620 (440 aa).

The 52-residue stretch at 1-52 (MDRFSNLPDDVIYHIVSFLSAKEATCLKFVSKNFQNLVTIKRNVVFHHWESF) folds into the F-box domain. LRR repeat units follow at residues 4–31 (FSNL…KFVS), 126–153 (LKLG…ILDS), 156–181 (FYAS…VIDR), 194–205 (SSPTLKRLTLRR), 210–235 (PEPE…KYKD), 264–289 (YWLN…SIKV), and 318–343 (EADF…TIEG).

This is Putative F-box/LRR-repeat protein At5g15620 from Arabidopsis thaliana (Mouse-ear cress).